The sequence spans 211 residues: ATP phosphoribosyltransferase (211 aa).

The protein belongs to the ATP phosphoribosyltransferase family. Short subfamily. In terms of assembly, heteromultimer composed of HisG and HisZ subunits.

The protein resides in the cytoplasm. It carries out the reaction 1-(5-phospho-beta-D-ribosyl)-ATP + diphosphate = 5-phospho-alpha-D-ribose 1-diphosphate + ATP. Its pathway is amino-acid biosynthesis; L-histidine biosynthesis; L-histidine from 5-phospho-alpha-D-ribose 1-diphosphate: step 1/9. Functionally, catalyzes the condensation of ATP and 5-phosphoribose 1-diphosphate to form N'-(5'-phosphoribosyl)-ATP (PR-ATP). Has a crucial role in the pathway because the rate of histidine biosynthesis seems to be controlled primarily by regulation of HisG enzymatic activity. The sequence is that of ATP phosphoribosyltransferase from Bacillus cereus (strain ATCC 10987 / NRS 248).